The sequence spans 157 residues: Ubiquitin-like protein 4A (157 aa).

The Ubiquitin-like domain maps to methionine 1 to lysine 76. Lysine 48 participates in a covalent cross-link: Glycyl lysine isopeptide (Lys-Gly) (interchain with G-Cter in ubiquitin). Phosphoserine is present on serine 90. Positions tryptophan 96 to leucine 138 are required and sufficient for interaction with BAG6.

In terms of assembly, component of the BAG6/BAT3 complex, at least composed of BAG6, UBL4A and GET4/TRC35. Interacts with BAG6; the interaction is direct and required for UBL4A protein stability. Interacts with USP13; may be indirect via BAG6. In terms of processing, polyubiquitinated. Ubiquitination by AMFR and deubiquitination by USP13 may regulate the interaction between the BAG6/BAT3 complex and SGTA and therefore may regulate client proteins fate.

It is found in the cytoplasm. It localises to the cytosol. The protein resides in the nucleus. In terms of biological role, as part of a cytosolic protein quality control complex, the BAG6/BAT3 complex, maintains misfolded and hydrophobic patches-containing proteins in a soluble state and participates in their proper delivery to the endoplasmic reticulum or alternatively can promote their sorting to the proteasome where they undergo degradation. The BAG6/BAT3 complex is involved in the post-translational delivery of tail-anchored/type II transmembrane proteins to the endoplasmic reticulum membrane. Recruited to ribosomes, it interacts with the transmembrane region of newly synthesized tail-anchored proteins and together with SGTA and ASNA1 mediates their delivery to the endoplasmic reticulum. Client proteins that cannot be properly delivered to the endoplasmic reticulum are ubiquitinated and sorted to the proteasome. Similarly, the BAG6/BAT3 complex also functions as a sorting platform for proteins of the secretory pathway that are mislocalized to the cytosol either delivering them to the proteasome for degradation or to the endoplasmic reticulum. The BAG6/BAT3 complex also plays a role in the endoplasmic reticulum-associated degradation (ERAD), a quality control mechanism that eliminates unwanted proteins of the endoplasmic reticulum through their retrotranslocation to the cytosol and their targeting to the proteasome. It maintains these retrotranslocated proteins in an unfolded yet soluble state condition in the cytosol to ensure their proper delivery to the proteasome. The sequence is that of Ubiquitin-like protein 4A from Mus musculus (Mouse).